The chain runs to 944 residues: 2-oxoglutarate dehydrogenase E1 component (944 aa).

The disordered stretch occupies residues 918–944; it reads SSTAEGDPTVHKKEQERIVSDSLTRKN. Residues 925–936 show a composition bias toward basic and acidic residues; sequence PTVHKKEQERIV.

Belongs to the alpha-ketoglutarate dehydrogenase family. As to quaternary structure, homodimer. Part of the 2-oxoglutarate dehydrogenase (OGDH) complex composed of E1 (2-oxoglutarate dehydrogenase), E2 (dihydrolipoamide succinyltransferase) and E3 (dihydrolipoamide dehydrogenase); the complex contains multiple copies of the three enzymatic components (E1, E2 and E3). The cofactor is thiamine diphosphate.

The catalysed reaction is N(6)-[(R)-lipoyl]-L-lysyl-[protein] + 2-oxoglutarate + H(+) = N(6)-[(R)-S(8)-succinyldihydrolipoyl]-L-lysyl-[protein] + CO2. In terms of biological role, E1 component of the 2-oxoglutarate dehydrogenase (OGDH) complex which catalyzes the decarboxylation of 2-oxoglutarate, the first step in the conversion of 2-oxoglutarate to succinyl-CoA and CO(2). This chain is 2-oxoglutarate dehydrogenase E1 component, found in Bacillus pumilus (strain SAFR-032).